The following is a 229-amino-acid chain: Enolase-phosphatase E1 (229 aa).

The segment at 206–229 (DRDPASHHPQVQRFDDIHPEQIPA) is disordered. The span at 218 to 229 (RFDDIHPEQIPA) shows a compositional bias: basic and acidic residues.

It belongs to the HAD-like hydrolase superfamily. MasA/MtnC family. Monomer. It depends on Mg(2+) as a cofactor.

It carries out the reaction 5-methylsulfanyl-2,3-dioxopentyl phosphate + H2O = 1,2-dihydroxy-5-(methylsulfanyl)pent-1-en-3-one + phosphate. Its pathway is amino-acid biosynthesis; L-methionine biosynthesis via salvage pathway; L-methionine from S-methyl-5-thio-alpha-D-ribose 1-phosphate: step 3/6. The protein operates within amino-acid biosynthesis; L-methionine biosynthesis via salvage pathway; L-methionine from S-methyl-5-thio-alpha-D-ribose 1-phosphate: step 4/6. Functionally, bifunctional enzyme that catalyzes the enolization of 2,3-diketo-5-methylthiopentyl-1-phosphate (DK-MTP-1-P) into the intermediate 2-hydroxy-3-keto-5-methylthiopentenyl-1-phosphate (HK-MTPenyl-1-P), which is then dephosphorylated to form the acireductone 1,2-dihydroxy-3-keto-5-methylthiopentene (DHK-MTPene). This Klebsiella oxytoca protein is Enolase-phosphatase E1.